The following is a 599-amino-acid chain: Beta-(1--&gt;2)glucan export ATP-binding/permease protein NdvA (599 aa).

The ABC transmembrane type-1 domain maps to 21–301 (TITMCVASVL…ISAFINQTVT (281 aa)). A run of 5 helical transmembrane segments spans residues 22–42 (ITMC…PVLF), 55–75 (IFSP…AAVF), 156–176 (MRMS…GQLV), 248–268 (MAST…VTKG), and 276–296 (IAFI…SAFI). Residues 335–569 (IVFDNVTYEF…GGRFSDLLRA (235 aa)) form the ABC transporter domain. 368 to 375 (GPTGAGKT) contacts ATP.

The protein belongs to the ABC transporter superfamily. Beta-(1--&gt;2)glucan exporter (TC 3.A.1.108.1) family. Homodimer.

It is found in the cell inner membrane. The enzyme catalyses [(1-&gt;2)-beta-D-glucosyl](n)(in) + ATP + H2O = [(1-&gt;2)-beta-D-glucosyl](n)(out) + ADP + phosphate + H(+). Its function is as follows. Involved in beta-(1--&gt;2)glucan export. Transmembrane domains (TMD) form a pore in the inner membrane and the ATP-binding domain (NBD) is responsible for energy generation. The sequence is that of Beta-(1--&gt;2)glucan export ATP-binding/permease protein NdvA from Brucella melitensis biotype 1 (strain ATCC 23456 / CCUG 17765 / NCTC 10094 / 16M).